The primary structure comprises 173 residues: Mesogenin-1 (173 aa).

A compositionally biased stretch (polar residues) spans 39–68 (ESYSLSQTPSPQSVSPAASYESTYSSSPHT). 2 disordered regions span residues 39–69 (ESYS…PHTG) and 96–117 (TKKD…ASER). The span at 99-114 (DHGHKTSMTTHRRRKA) shows a compositional bias: basic residues. In terms of domain architecture, bHLH spans 109-163 (HRRRKASEREKLRMRAIAEALHTLRNNLPPMYSQGRQPLTKIQTLKCTINYISEL).

The protein localises to the nucleus. Functionally, involved in specifying the paraxial, but not dorsal, mesoderm. May regulate the expression of T-box transcription factors required for mesoderm formation and differentiation, such as brachyury T, wnt8, vegt and eomes. This Xenopus laevis (African clawed frog) protein is Mesogenin-1 (msgn1).